The following is a 409-amino-acid chain: Phenoxybenzoate dioxygenase subunit alpha (409 aa).

The Rieske domain maps to 45-149; it reads WQPVALSADV…VEERYGLVFA (105 aa). Positions 85, 87, 104, and 107 each coordinate [2Fe-2S] cluster. Fe cation is bound by residues H210 and H215.

The protein belongs to the bacterial ring-hydroxylating dioxygenase alpha subunit family. As to quaternary structure, this dioxygenase system consists of two proteins: the alpha subunit (PobA) and a subunit (PobB) that acts as a ferredoxin and a ferredoxin reductase. [2Fe-2S] cluster serves as cofactor. Requires Fe cation as cofactor.

The protein operates within aromatic compound metabolism; carboxydiphenyl ether degradation. Its function is as follows. Degrades exclusively diarylether compounds having carboxyl groups in the 3- or 4-position. Yields a hemiacetal that spontaneously hydrolyzes to phenol and protocatechuate. The sequence is that of Phenoxybenzoate dioxygenase subunit alpha (pobA) from Ectopseudomonas oleovorans (Pseudomonas oleovorans).